Reading from the N-terminus, the 351-residue chain is Histidine protein kinase SaeS (351 aa).

The next 2 helical transmembrane spans lie at 9 to 29 and 40 to 60; these read IIIG…IAYI and TLTL…SIFI. The region spanning 61 to 114 is the HAMP domain; sequence NPLIQKIKQFNIKTKQFANGNYASNDKTFNSPKEIYELNQSFNKMASEITQQMN. Positions 129-348 constitute a Histidine kinase domain; that stretch reads NLAHDLKTPL…TMTVTLHKLD (220 aa). His-132 is modified (phosphohistidine; by autocatalysis).

Autophosphorylated.

Its subcellular location is the cell membrane. It carries out the reaction ATP + protein L-histidine = ADP + protein N-phospho-L-histidine.. Member of the two-component regulatory system SaeR/SaeS involved in the regulation of staphylococcal virulence factors in a strain-dependent fashion. Probably functions as a membrane-associated protein kinase that upon sensing the appropriate signal, autophosphorylates and in turn activates the cytosolic response regulator SaeR. SaeR/SaeS activates the expression of exoproteins involved in adhesion and invasion of host cells, including hemolysins (hla, hlb, hlgC), coa, DNase, spa and cell wall-associated proteins (emp, eap, fnbA, fnbB, efb). Represses the expression of type 5 capsular polysaccharide (cap operon). Also modulates the expression of several other genes. The chain is Histidine protein kinase SaeS (saeS) from Staphylococcus aureus (strain Newman).